Here is a 723-residue protein sequence, read N- to C-terminus: Catalase-peroxidase (723 aa).

The segment at residues 96 to 224 (WHAAGSYRVA…LAAVMMGLIY (129 aa)) is a cross-link (tryptophyl-tyrosyl-methioninium (Trp-Tyr) (with M-250)). The active-site Proton acceptor is histidine 97. Residues 224–250 (YVNPEGVDGQPDPLKTAQDVRVTFARM) constitute a cross-link (tryptophyl-tyrosyl-methioninium (Tyr-Met) (with W-96)). Residue histidine 265 coordinates heme b.

Belongs to the peroxidase family. Peroxidase/catalase subfamily. In terms of assembly, homodimer or homotetramer. It depends on heme b as a cofactor. Formation of the three residue Trp-Tyr-Met cross-link is important for the catalase, but not the peroxidase activity of the enzyme.

The catalysed reaction is H2O2 + AH2 = A + 2 H2O. The enzyme catalyses 2 H2O2 = O2 + 2 H2O. Bifunctional enzyme with both catalase and broad-spectrum peroxidase activity. This chain is Catalase-peroxidase, found in Leptothrix cholodnii (strain ATCC 51168 / LMG 8142 / SP-6) (Leptothrix discophora (strain SP-6)).